Here is a 505-residue protein sequence, read N- to C-terminus: Putative heat shock protein HSP 90-beta 4 (505 aa).

Residues Asn22, Lys83, and Phe109 each coordinate ATP. A disordered region spans residues 197–248 (EKEISDDEEEKGEKEEEDKDDKEKPKTEDVGSDEEDDTDKNNKKKTKKIKEK). A compositionally biased stretch (acidic residues) spans 200 to 216 (ISDDEEEKGEKEEEDKD).

It belongs to the heat shock protein 90 family. In terms of assembly, homodimer.

It is found in the cytoplasm. Functionally, putative molecular chaperone that may promote the maturation, structural maintenance and proper regulation of specific target proteins. The protein is Putative heat shock protein HSP 90-beta 4 (HSP90AB4P) of Homo sapiens (Human).